The sequence spans 472 residues: 3-isopropylmalate dehydratase large subunit (472 aa).

[4Fe-4S] cluster-binding residues include Cys347, Cys407, and Cys410.

It belongs to the aconitase/IPM isomerase family. LeuC type 1 subfamily. As to quaternary structure, heterodimer of LeuC and LeuD. [4Fe-4S] cluster is required as a cofactor.

It carries out the reaction (2R,3S)-3-isopropylmalate = (2S)-2-isopropylmalate. It functions in the pathway amino-acid biosynthesis; L-leucine biosynthesis; L-leucine from 3-methyl-2-oxobutanoate: step 2/4. In terms of biological role, catalyzes the isomerization between 2-isopropylmalate and 3-isopropylmalate, via the formation of 2-isopropylmaleate. This Bacillus velezensis (strain DSM 23117 / BGSC 10A6 / LMG 26770 / FZB42) (Bacillus amyloliquefaciens subsp. plantarum) protein is 3-isopropylmalate dehydratase large subunit.